The chain runs to 67 residues: Large ribosomal subunit protein uL29 (67 aa).

It belongs to the universal ribosomal protein uL29 family.

This is Large ribosomal subunit protein uL29 from Wolbachia pipientis wMel.